A 387-amino-acid chain; its full sequence is Acetylornithine aminotransferase (387 aa).

Residues 97–98 (GT) and Phe130 contribute to the pyridoxal 5'-phosphate site. A N(2)-acetyl-L-ornithine-binding site is contributed by Arg133. Position 215–218 (215–218 (DEVQ)) interacts with pyridoxal 5'-phosphate. The residue at position 244 (Lys244) is an N6-(pyridoxal phosphate)lysine. A pyridoxal 5'-phosphate-binding site is contributed by Thr273.

It belongs to the class-III pyridoxal-phosphate-dependent aminotransferase family. ArgD subfamily. Homodimer. It depends on pyridoxal 5'-phosphate as a cofactor.

The protein resides in the cytoplasm. The catalysed reaction is N(2)-acetyl-L-ornithine + 2-oxoglutarate = N-acetyl-L-glutamate 5-semialdehyde + L-glutamate. Its pathway is amino-acid biosynthesis; L-arginine biosynthesis; N(2)-acetyl-L-ornithine from L-glutamate: step 4/4. This is Acetylornithine aminotransferase from Clostridium acetobutylicum (strain ATCC 824 / DSM 792 / JCM 1419 / IAM 19013 / LMG 5710 / NBRC 13948 / NRRL B-527 / VKM B-1787 / 2291 / W).